The primary structure comprises 137 residues: Small heat shock protein IbpA (137 aa).

In terms of domain architecture, sHSP spans 28-137; sequence NQSNGGYPPY…SLKPRRIEIK (110 aa).

This sequence belongs to the small heat shock protein (HSP20) family. In terms of assembly, monomer. Forms homomultimers of about 100-150 subunits at optimal growth temperatures. Conformation changes to monomers at high temperatures or high ionic concentrations.

The protein localises to the cytoplasm. Functionally, associates with aggregated proteins, together with IbpB, to stabilize and protect them from irreversible denaturation and extensive proteolysis during heat shock and oxidative stress. Aggregated proteins bound to the IbpAB complex are more efficiently refolded and reactivated by the ATP-dependent chaperone systems ClpB and DnaK/DnaJ/GrpE. Its activity is ATP-independent. This chain is Small heat shock protein IbpA, found in Yersinia pseudotuberculosis serotype O:1b (strain IP 31758).